Here is a 382-residue protein sequence, read N- to C-terminus: O-antigen polymerase (382 aa).

Residues 1 to 3 (MNN) lie on the Cytoplasmic side of the membrane. The chain crosses the membrane as a helical span at residues 4-22 (INKIFITFLCIELIIGGGG). Residues 23 to 34 (RLLEPLGIFPLR) lie on the Periplasmic side of the membrane. A helical membrane pass occupies residues 35-54 (YLLFVFSFILLIFNLVTFNF). Residues 55–62 (SITQKCVS) lie on the Cytoplasmic side of the membrane. A helical transmembrane segment spans residues 63–81 (LFIWLLLFPFYGFFVGLLA). Topologically, residues 82–94 (GNKINDILFDVQP) are periplasmic. The helical transmembrane segment at 95–112 (YLFMLSLIYLFTLRYTLK) threads the bilayer. At 113-125 (VFSCEIFIKIVNA) the chain is on the cytoplasmic side. Residues 126–146 (FALYGSLLYISYIILLNFGLL) traverse the membrane as a helical segment. At 147–167 (NFNLIYEHLSLTSEFFFRPDG) the chain is on the periplasmic side. The chain crosses the membrane as a helical span at residues 168-187 (AFFSKSFYFFGVGAIISFVD). Over 188–189 (KK) the chain is Cytoplasmic. The helical transmembrane segment at 190–206 (YLKCLIIVLAILLTESR) threads the bilayer. Topologically, residues 207 to 208 (GV) are periplasmic. Residues 209-226 (LLFTTLSLLLASFKLHKL) form a helical membrane-spanning segment. Topologically, residues 227–229 (YLN) are cytoplasmic. Residues 230 to 247 (TIIIILGSVLFIIMLYMV) traverse the membrane as a helical segment. At 248–300 (GSRSEDSDSVRFNDLYFYYKNVDLATFLFGRGFGSFILDRLRIEIVPLEILQK) the chain is on the periplasmic side. A helical transmembrane segment spans residues 301–318 (TGVIGVFISLVPMLLIFL). Over 319 to 329 (KGYFLNSTKTS) the chain is Cytoplasmic. The chain crosses the membrane as a helical span at residues 330–349 (LMMSLILFFSITVSITNPFL). Residues 350-352 (FTP) lie on the Periplasmic side of the membrane. Residues 353-370 (MGIFIIGVVVLWVFSIEN) traverse the membrane as a helical segment. Topologically, residues 371-382 (IQISNNLTSGAK) are cytoplasmic.

The protein resides in the cell inner membrane. The enzyme catalyses n lipid-linked O-antigen repeat units = a lipid-linked O antigen + (n-1) polyisoprenyl diphosphate.. The protein operates within bacterial outer membrane biogenesis; LPS O-antigen biosynthesis. Polymerase involved in the biosynthesis of the lipopolysaccharide (LPS). Catalyzes the polymerization of the O-antigen repeat units on the periplasmic face of the inner membrane, leading to the formation of the lipid-linked O-antigen molecule. The polypeptide is O-antigen polymerase (Shigella flexneri).